Reading from the N-terminus, the 51-residue chain is Large ribosomal subunit protein eL39 (51 aa).

The segment at 32-51 (KGSVKQHPKMRHWRRKNLKK) is disordered. Over residues 33–51 (GSVKQHPKMRHWRRKNLKK) the composition is skewed to basic residues.

The protein belongs to the eukaryotic ribosomal protein eL39 family.

In Methanococcus maripaludis (strain C5 / ATCC BAA-1333), this protein is Large ribosomal subunit protein eL39.